Consider the following 212-residue polypeptide: Deoxyribose-phosphate aldolase (212 aa).

The active-site Proton donor/acceptor is D90. K151 serves as the catalytic Schiff-base intermediate with acetaldehyde. The Proton donor/acceptor role is filled by K176.

It belongs to the DeoC/FbaB aldolase family. DeoC type 1 subfamily.

It localises to the cytoplasm. The enzyme catalyses 2-deoxy-D-ribose 5-phosphate = D-glyceraldehyde 3-phosphate + acetaldehyde. The protein operates within carbohydrate degradation; 2-deoxy-D-ribose 1-phosphate degradation; D-glyceraldehyde 3-phosphate and acetaldehyde from 2-deoxy-alpha-D-ribose 1-phosphate: step 2/2. Its function is as follows. Catalyzes a reversible aldol reaction between acetaldehyde and D-glyceraldehyde 3-phosphate to generate 2-deoxy-D-ribose 5-phosphate. The chain is Deoxyribose-phosphate aldolase from Halobacterium salinarum (strain ATCC 29341 / DSM 671 / R1).